Here is a 162-residue protein sequence, read N- to C-terminus: Protein-export protein SecB (162 aa).

Belongs to the SecB family. Homotetramer, a dimer of dimers. One homotetramer interacts with 1 SecA dimer.

Its subcellular location is the cytoplasm. Functionally, one of the proteins required for the normal export of preproteins out of the cell cytoplasm. It is a molecular chaperone that binds to a subset of precursor proteins, maintaining them in a translocation-competent state. It also specifically binds to its receptor SecA. This is Protein-export protein SecB from Legionella pneumophila subsp. pneumophila (strain Philadelphia 1 / ATCC 33152 / DSM 7513).